The sequence spans 550 residues: Arginine--tRNA ligase (550 aa).

The 'HIGH' region motif lies at 130-140 (ANPTGPIHIGG).

It belongs to the class-I aminoacyl-tRNA synthetase family. As to quaternary structure, monomer.

It localises to the cytoplasm. The enzyme catalyses tRNA(Arg) + L-arginine + ATP = L-arginyl-tRNA(Arg) + AMP + diphosphate. This is Arginine--tRNA ligase from Mycolicibacterium gilvum (strain PYR-GCK) (Mycobacterium gilvum (strain PYR-GCK)).